The following is a 320-amino-acid chain: MQTRNAFSWLKKQITRSISVSLMIYILTRTSISSAYPIFAQQGYENPREATGRIVCANCHLANKPVEIEVPQAVLPDTVFEAVVRIPYDMQLKQVLANGKKGGLNVGAVLILPEGFELAPPDRISPEMKEKIGNLSFQSYRPNKTNILVVGPVPGKKYSEITFPILSPDPATKKDVHFLKYPIYVGGNRGRGQIYPDGNKSNNTVYNATAAGIVSKIIRKEKGGYEITITDASEGRQVVDIIPPGPELLVSEGESIKFDQPLTSNPNVGGFGQGDAEIVLQDPLRVQGLLFFLASVILAQIFLVLKKKQFEKVQLAEMNF.

A signal peptide spans 1–35; the sequence is MQTRNAFSWLKKQITRSISVSLMIYILTRTSISSA. Heme-binding residues include tyrosine 36, cysteine 56, cysteine 59, and histidine 60. Residues 286–306 traverse the membrane as a helical segment; the sequence is VQGLLFFLASVILAQIFLVLK.

This sequence belongs to the cytochrome f family. The 4 large subunits of the cytochrome b6-f complex are cytochrome b6, subunit IV (17 kDa polypeptide, petD), cytochrome f and the Rieske protein, while the 4 small subunits are PetG, PetL, PetM and PetN. The complex functions as a dimer. It depends on heme as a cofactor.

It is found in the plastid. Its subcellular location is the chloroplast thylakoid membrane. In terms of biological role, component of the cytochrome b6-f complex, which mediates electron transfer between photosystem II (PSII) and photosystem I (PSI), cyclic electron flow around PSI, and state transitions. The protein is Cytochrome f of Solanum bulbocastanum (Wild potato).